We begin with the raw amino-acid sequence, 119 residues long: Secreted RxLR effector protein RXLR-C04 (119 aa).

The N-terminal stretch at 1–22 (MRLSYIFVVVATIITNCDIASA) is a signal peptide. The RxLR-dEER motif lies at 40-77 (RILRQTNDSDDLEPIRHAMLDMELLEKIAKDPKYAEEV). Asparagine 46 carries N-linked (GlcNAc...) asparagine glycosylation.

It belongs to the RxLR effector family.

Its subcellular location is the secreted. It localises to the host cytoplasm. The protein resides in the host nucleus. Functionally, secreted effector that suppresses pattern-triggered immunity (PTI) in plant host. This Plasmopara halstedii (Downy mildew of sunflower) protein is Secreted RxLR effector protein RXLR-C04.